The following is a 188-amino-acid chain: Elongation factor P (188 aa).

It belongs to the elongation factor P family.

It is found in the cytoplasm. It functions in the pathway protein biosynthesis; polypeptide chain elongation. Its function is as follows. Involved in peptide bond synthesis. Stimulates efficient translation and peptide-bond synthesis on native or reconstituted 70S ribosomes in vitro. Probably functions indirectly by altering the affinity of the ribosome for aminoacyl-tRNA, thus increasing their reactivity as acceptors for peptidyl transferase. The sequence is that of Elongation factor P from Ralstonia nicotianae (strain ATCC BAA-1114 / GMI1000) (Ralstonia solanacearum).